A 204-amino-acid polypeptide reads, in one-letter code: Glideosome-associated protein 45 (204 aa).

The tract at residues 1–86 (MGNKCSRSKV…KEEIDYATQE (86 aa)) is disordered. Gly-2 carries N-myristoyl glycine lipidation. Residues 2-29 (GNKCSRSKVKEPKRKDIDELAERENLKK) form a targets GAP45 to the cell membrane; however, dispensable for the formation of the glideosome complex and the association with the inner membrane complex region. Over residues 9–53 (KVKEPKRKDIDELAERENLKKQSEEIIEEKPEEVVEQVEETHEEP) the composition is skewed to basic and acidic residues. The span at 54–73 (LEQEQELDEQKIEEEEEEPE) shows a compositional bias: acidic residues. Ser-89 carries the post-translational modification Phosphoserine; by CPK10. Ser-103 is subject to Phosphoserine; by CPK10 and PKB. Ser-149 carries the post-translational modification Phosphoserine; by CPK10.

In terms of assembly, component of the glideosome complex composed of GAP50, GAP45, MTIP and MyoA; the complex is formed during the late schizont stage and in merozoites. MyoA, MTIP and GAP45 probably form an initial complex in the cytoplasm which is then recruited to the outer face of the inner membrane complex via the interaction with GAP50. Interacts with GAP50; the interaction is independent of GAP45 phosphorylation status and can also occur independently of the formation of the glideosome complex. Phosphorylated at multiple sites. Phosphorylation increases during the schizont stage and peaks in segmented merozoites. May be phosphorylated by PKB. In schizonts, phosphorylated at Ser-89 and Ser-149 in response to phospholipase C-mediated calcium release. Phosphorylation at Ser-149 begins in early schizonts while phosphorylation at Ser-103 begins in late schizonts. Phosphorylation at Ser-89, Ser-103 and Ser-149 appears to be dispensable for GAP45 inner membrane complex localization or GAP45 inclusion in the glideosome complex. Phosphorylation is not required for interaction with GAP50; however, it may regulate the interaction with MTIP and MyoA. Post-translationally, N-myristoylated by NMT. N-myristoylation may contribute to the targeting of GAP45 to the inner membrane complex with the subsequent palmitoylation strengthening the interaction with the membrane. In terms of processing, palmitoylated. Palmitoylation appears to follow N-myristoylation and may strengthen the interaction with the inner membrane complex.

Its subcellular location is the inner membrane complex. Its function is as follows. Component of the glideosome complex, an inner membrane complex structure involved in parasite gliding motility and host cell invasion. During the asexual blood stage, required in schizonts to recruit MTIP and MyoA to the inner membrane complex where they assemble with GAP50 to form the glideosome complex. By regulating the formation of the glideosome, plays an essential role during merozoite invasion of host erythrocytes. The polypeptide is Glideosome-associated protein 45 (Plasmodium falciparum (isolate 3D7)).